Reading from the N-terminus, the 29-residue chain is Dermaseptin-J9 (29 aa).

Expressed by the skin glands.

Its subcellular location is the secreted. In terms of biological role, has antimicrobial activity. The chain is Dermaseptin-J9 from Phasmahyla jandaia (Jandaia leaf frog).